The following is a 186-amino-acid chain: Elongation factor P (186 aa).

Belongs to the elongation factor P family.

It localises to the cytoplasm. It functions in the pathway protein biosynthesis; polypeptide chain elongation. Functionally, involved in peptide bond synthesis. Stimulates efficient translation and peptide-bond synthesis on native or reconstituted 70S ribosomes in vitro. Probably functions indirectly by altering the affinity of the ribosome for aminoacyl-tRNA, thus increasing their reactivity as acceptors for peptidyl transferase. This Shewanella loihica (strain ATCC BAA-1088 / PV-4) protein is Elongation factor P.